The chain runs to 243 residues: MSSPAEYYKSLPPISKAYGTLCFFTTVLVRLHILNPLFLYLYYPRVFKKFEVWRIFTSFFFLGPFSINFGIRLLMIARYGVMLEKGAFDKRTADFLWMMIFGAISLLVLSVIPQLNTYVLGLPMVSMLVYVWSRENPNAQINIYGILQLKAFYLPWVMLLLDVIFGSPLMPGLLGIMVGHLYYYFAVLHPLATGKNYLKTPKWVHKIVARFRIGMQANAPVRAPANGNAGTGAFRGRSYRLNQ.

The Cytoplasmic portion of the chain corresponds to 1 to 20 (MSSPAEYYKSLPPISKAYGT). Residues 21–41 (LCFFTTVLVRLHILNPLFLYL) form a helical membrane-spanning segment. The Lumenal portion of the chain corresponds to 42 to 54 (YYPRVFKKFEVWR). Residues 55–75 (IFTSFFFLGPFSINFGIRLLM) traverse the membrane as a helical segment. Topologically, residues 76–94 (IARYGVMLEKGAFDKRTAD) are cytoplasmic. The chain crosses the membrane as a helical span at residues 95-115 (FLWMMIFGAISLLVLSVIPQL). The Lumenal segment spans residues 116–155 (NTYVLGLPMVSMLVYVWSRENPNAQINIYGILQLKAFYLP). A helical membrane pass occupies residues 156–176 (WVMLLLDVIFGSPLMPGLLGI). At 177–243 (MVGHLYYYFA…FRGRSYRLNQ (67 aa)) the chain is on the cytoplasmic side.

The protein belongs to the derlin family. As to expression, expressed in roots and endosperm.

Its subcellular location is the endoplasmic reticulum membrane. Functionally, may be involved in the degradation process of specific misfolded endoplasmic reticulum (ER) luminal proteins. This Zea mays (Maize) protein is Derlin-1.2 (DER1.2).